Consider the following 220-residue polypeptide: ATP-dependent dethiobiotin synthetase BioD (220 aa).

ATP is bound at residue 11–16 (GVGKTF). T15 contacts Mg(2+). K36 is a catalytic residue. T40 is a binding site for substrate. Residues D48 and 107–110 (EGAG) each bind ATP. Residues D48 and E107 each contribute to the Mg(2+) site.

This sequence belongs to the dethiobiotin synthetase family. In terms of assembly, homodimer. It depends on Mg(2+) as a cofactor.

Its subcellular location is the cytoplasm. It carries out the reaction (7R,8S)-7,8-diammoniononanoate + CO2 + ATP = (4R,5S)-dethiobiotin + ADP + phosphate + 3 H(+). It participates in cofactor biosynthesis; biotin biosynthesis; biotin from 7,8-diaminononanoate: step 1/2. Catalyzes a mechanistically unusual reaction, the ATP-dependent insertion of CO2 between the N7 and N8 nitrogen atoms of 7,8-diaminopelargonic acid (DAPA, also called 7,8-diammoniononanoate) to form a ureido ring. This is ATP-dependent dethiobiotin synthetase BioD from Aquifex aeolicus (strain VF5).